The following is a 226-amino-acid chain: Transmembrane protein 204 (226 aa).

Over 1–5 the chain is Cytoplasmic; sequence MTVQR. Residues 6–26 form a helical membrane-spanning segment; that stretch reads LVAAAVLVALVSLILNNVAAF. Residues 27–103 are Extracellular-facing; the sequence is TSNWVCQTLE…LQFDMMRACN (77 aa). The helical transmembrane segment at 104 to 124 threads the bilayer; the sequence is LVATAALTAGQLTFLLGLVGL. Residues 125–136 are Cytoplasmic-facing; that stretch reads PLLSPDAPCWEE. The helical transmembrane segment at 137 to 157 threads the bilayer; it reads AMAAAFQLASFVLVIGLVTFY. Residues 158 to 170 lie on the Extracellular side of the membrane; sequence RIGPYTNLSWSCY. A glycan (N-linked (GlcNAc...) asparagine) is linked at Asn164. The helical transmembrane segment at 171–191 threads the bilayer; that stretch reads LNIGACLLATLAAAMLIWNIL. At 192-226 the chain is on the cytoplasmic side; it reads HKREDCMAPRVIVISRSLTARFRRGLDNDYVESPC.

In terms of tissue distribution, highly expressed in lung, heart, kidney and placenta. Lower expression in thymus, spleen, liver, testis and ovary. Expressed in endothelial and restricted epithelial cell populations.

The protein localises to the cell junction. The protein resides in the adherens junction. It localises to the cell membrane. Can influence paracellular permeability. Appears to be involved in cell-cell interactions through adherens. This is Transmembrane protein 204 (TMEM204) from Homo sapiens (Human).